A 326-amino-acid polypeptide reads, in one-letter code: Vitamin B12 import system permease protein BtuC (326 aa).

Transmembrane regions (helical) follow at residues Trp15 to Glu35, Leu61 to Phe81, Pro88 to Gly108, Leu112 to Leu132, Leu146 to Phe166, Gly184 to Ile204, Gly240 to Ile260, Val274 to Ala294, and Glu302 to Leu322.

It belongs to the binding-protein-dependent transport system permease family. FecCD subfamily. In terms of assembly, the complex is composed of two ATP-binding proteins (BtuD), two transmembrane proteins (BtuC) and a solute-binding protein (BtuF).

It is found in the cell inner membrane. Part of the ABC transporter complex BtuCDF involved in vitamin B12 import. Involved in the translocation of the substrate across the membrane. This Shigella boydii serotype 18 (strain CDC 3083-94 / BS512) protein is Vitamin B12 import system permease protein BtuC.